The chain runs to 157 residues: 2-C-methyl-D-erythritol 2,4-cyclodiphosphate synthase (157 aa).

Residues aspartate 8 and histidine 10 each contribute to the a divalent metal cation site. Residues 8-10 (DVH) and 34-35 (HS) each bind 4-CDP-2-C-methyl-D-erythritol 2-phosphate. Histidine 42 is an a divalent metal cation binding site. 4-CDP-2-C-methyl-D-erythritol 2-phosphate is bound by residues 56 to 58 (DIG), 132 to 135 (TTNE), and arginine 142.

The protein belongs to the IspF family. Homotrimer. It depends on a divalent metal cation as a cofactor.

It carries out the reaction 4-CDP-2-C-methyl-D-erythritol 2-phosphate = 2-C-methyl-D-erythritol 2,4-cyclic diphosphate + CMP. It functions in the pathway isoprenoid biosynthesis; isopentenyl diphosphate biosynthesis via DXP pathway; isopentenyl diphosphate from 1-deoxy-D-xylulose 5-phosphate: step 4/6. Its function is as follows. Involved in the biosynthesis of isopentenyl diphosphate (IPP) and dimethylallyl diphosphate (DMAPP), two major building blocks of isoprenoid compounds. Catalyzes the conversion of 4-diphosphocytidyl-2-C-methyl-D-erythritol 2-phosphate (CDP-ME2P) to 2-C-methyl-D-erythritol 2,4-cyclodiphosphate (ME-CPP) with a corresponding release of cytidine 5-monophosphate (CMP). In Chlorobium luteolum (strain DSM 273 / BCRC 81028 / 2530) (Pelodictyon luteolum), this protein is 2-C-methyl-D-erythritol 2,4-cyclodiphosphate synthase.